Reading from the N-terminus, the 221-residue chain is Eukaryotic translation initiation factor NCBP (221 aa).

The protein belongs to the eukaryotic initiation factor 4E family. As to quaternary structure, EIF4F is a multi-subunit complex, the composition of which varies with external and internal environmental conditions. It is composed of at least EIF4A, EIF4E and EIF4G. EIF4E is also known to interact with other partners. In higher plants two isoforms of EIF4F have been identified, named isoform EIF4F and isoform EIF(iso)4F. Isoform EIF4F has subunits p220 and p26, whereas isoform EIF(iso)4F has subunits p82 and p28.

Its function is as follows. Recognizes and binds the 7-methylguanosine-containing mRNA cap during an early step in the initiation of protein synthesis and facilitates ribosome binding by inducing the unwinding of the mRNAs secondary structures. In Arabidopsis thaliana (Mouse-ear cress), this protein is Eukaryotic translation initiation factor NCBP (NCBP).